The sequence spans 465 residues: E3 ubiquitin-protein ligase TRIM38 (465 aa).

The segment at C16 to R63 adopts an RING-type zinc-finger fold. Position 70 is a phosphoserine (S70). The segment at D88–V129 adopts a B box-type zinc-finger fold. Residues C93, H96, C115, and H121 each coordinate Zn(2+). The B30.2/SPRY domain maps to C274–D465.

Interacts (via B30.2/SPRY domain) with TAB2 and TAB3. Ubiquitous.

It is found in the cytoplasm. It catalyses the reaction S-ubiquitinyl-[E2 ubiquitin-conjugating enzyme]-L-cysteine + [acceptor protein]-L-lysine = [E2 ubiquitin-conjugating enzyme]-L-cysteine + N(6)-ubiquitinyl-[acceptor protein]-L-lysine.. It functions in the pathway protein modification; protein ubiquitination. Its pathway is protein modification; protein sumoylation. E3 ubiquitin-protein and E3 SUMO-protein ligase that acts as a regulator of innate immunity. Acts as a negative regulator of type I interferon IFN-beta production by catalyzing 'Lys-48'-linked polyubiquitination of AZI2/NAP1, leading to its degradation. Mediates 'Lys-48'-linked polyubiquitination and proteasomal degradation of the critical TLR adapter TICAM1, inhibiting TLR3-mediated type I interferon signaling. Acts as positive regulator of the cGAS-STING pathway by acting as a E3 SUMO-protein ligase: mediates sumoylation of CGAS and STING, preventing their degradation and thereby activating the innate immune response to DNA virus. Also acts as a negative regulator of NF-kappa-B signaling independently of its E3 protein ligase activity by promoting lysosome-dependent degradation of TAB2 and TAB3 adapters. The polypeptide is E3 ubiquitin-protein ligase TRIM38 (Homo sapiens (Human)).